Reading from the N-terminus, the 404-residue chain is Formate-dependent phosphoribosylglycinamide formyltransferase (404 aa).

N(1)-(5-phospho-beta-D-ribosyl)glycinamide-binding positions include 25–26 and Glu85; that span reads EL. Residues Arg118, Lys159, 164 to 169, 199 to 202, and Glu207 each bind ATP; these read SSGKGQ and EGFI. The 196-residue stretch at 123–318 folds into the ATP-grasp domain; it reads RLAAEELGLP…EFELHARAIL (196 aa). Glu277 and Glu289 together coordinate Mg(2+). Residues Asp296, Lys365, and 372 to 373 contribute to the N(1)-(5-phospho-beta-D-ribosyl)glycinamide site; that span reads RR.

It belongs to the PurK/PurT family. Homodimer.

It carries out the reaction N(1)-(5-phospho-beta-D-ribosyl)glycinamide + formate + ATP = N(2)-formyl-N(1)-(5-phospho-beta-D-ribosyl)glycinamide + ADP + phosphate + H(+). It functions in the pathway purine metabolism; IMP biosynthesis via de novo pathway; N(2)-formyl-N(1)-(5-phospho-D-ribosyl)glycinamide from N(1)-(5-phospho-D-ribosyl)glycinamide (formate route): step 1/1. Functionally, involved in the de novo purine biosynthesis. Catalyzes the transfer of formate to 5-phospho-ribosyl-glycinamide (GAR), producing 5-phospho-ribosyl-N-formylglycinamide (FGAR). Formate is provided by PurU via hydrolysis of 10-formyl-tetrahydrofolate. The chain is Formate-dependent phosphoribosylglycinamide formyltransferase from Burkholderia lata (strain ATCC 17760 / DSM 23089 / LMG 22485 / NCIMB 9086 / R18194 / 383).